The primary structure comprises 203 residues: Holliday junction branch migration complex subunit RuvA (203 aa).

Positions 1 to 64 are domain I; the sequence is MIGRLRGIIL…EDAQLLYGFN (64 aa). The interval 65–142 is domain II; it reads NKQERTLFKE…KGLHGDLFTP (78 aa). Residues 143-154 form a flexible linker region; sequence AVDLVLTSPASP. Positions 155-203 are domain III; that stretch reads TSEDAEQEAVAALVALGYKPQEASRMVSKIARPDASSETLIRDALRAAL.

This sequence belongs to the RuvA family. Homotetramer. Forms an RuvA(8)-RuvB(12)-Holliday junction (HJ) complex. HJ DNA is sandwiched between 2 RuvA tetramers; dsDNA enters through RuvA and exits via RuvB. An RuvB hexamer assembles on each DNA strand where it exits the tetramer. Each RuvB hexamer is contacted by two RuvA subunits (via domain III) on 2 adjacent RuvB subunits; this complex drives branch migration. In the full resolvosome a probable DNA-RuvA(4)-RuvB(12)-RuvC(2) complex forms which resolves the HJ.

It is found in the cytoplasm. The RuvA-RuvB-RuvC complex processes Holliday junction (HJ) DNA during genetic recombination and DNA repair, while the RuvA-RuvB complex plays an important role in the rescue of blocked DNA replication forks via replication fork reversal (RFR). RuvA specifically binds to HJ cruciform DNA, conferring on it an open structure. The RuvB hexamer acts as an ATP-dependent pump, pulling dsDNA into and through the RuvAB complex. HJ branch migration allows RuvC to scan DNA until it finds its consensus sequence, where it cleaves and resolves the cruciform DNA. This is Holliday junction branch migration complex subunit RuvA from Salmonella agona (strain SL483).